Here is a 252-residue protein sequence, read N- to C-terminus: Centromere protein V (252 aa).

A disordered region spans residues 1–80 (MRRTRSAVAT…EEPPPAVTPA (80 aa)). Phosphoserine is present on serine 18. An Omega-N-methylarginine modification is found at arginine 39. Residues 54–64 (SAKPRPKPPPR) are compositionally biased toward pro residues. The residue at position 78 (threonine 78) is a Phosphothreonine. One can recognise a CENP-V/GFA domain in the interval 125–237 (HTGGCHCGAV…TEEFNGSDWE (113 aa)). The Zn(2+) site is built by cysteine 129, cysteine 131, cysteine 149, cysteine 151, cysteine 154, cysteine 193, and cysteine 196. Serine 234 carries the phosphoserine modification.

Belongs to the Gfa family. It depends on Zn(2+) as a cofactor.

The protein localises to the chromosome. It is found in the centromere. Its subcellular location is the kinetochore. It localises to the nucleus. The protein resides in the cytoplasm. The protein localises to the cytoskeleton. It is found in the spindle. Its function is as follows. Required for distribution of pericentromeric heterochromatin in interphase nuclei and for centromere formation and organization, chromosome alignment and cytokinesis. The polypeptide is Centromere protein V (Cenpv) (Mus musculus (Mouse)).